The chain runs to 564 residues: MFS-type transporter astH (564 aa).

N-linked (GlcNAc...) asparagine glycosylation occurs at N23. The segment at 26–59 (KDTLVNCSPDPENPEKGQASSPRTQISVDDNEES) is disordered. Residues 43–53 (QASSPRTQISV) show a composition bias toward polar residues. Transmembrane regions (helical) follow at residues 69–89 (LAMI…DTTI), 106–126 (DVGW…LSFG), 143–163 (GMFE…GLII), and 197–217 (GILG…GGAF). A glycan (N-linked (GlcNAc...) asparagine) is linked at N220. The next 6 membrane-spanning stretches (helical) occupy residues 225–245 (WCFY…ILFF), 266–286 (LLGS…LQWG), 297–317 (IIAL…VQWW), 339–359 (LFSF…PMWF), 375–395 (LPMV…VGAL), and 396–416 (GYYT…AGLL). N425 is a glycosylation site (N-linked (GlcNAc...) asparagine). The next 2 helical transmembrane spans lie at 461 to 481 (TGTV…MSVG) and 537 to 557 (FYVA…MQWI).

It belongs to the major facilitator superfamily. TCR/Tet family.

The protein resides in the membrane. Functionally, MFS-type transporter; part of the gene cluster that mediates the biosynthesis of astellolides, drimane-type sesquiterpene esters that show antimicrobial, anti-inflammatory, and anti-tumor activities. Seems not to be involved in astellolides translocation. The sequence is that of MFS-type transporter astH from Aspergillus oryzae (strain ATCC 42149 / RIB 40) (Yellow koji mold).